The sequence spans 476 residues: Calcium/calmodulin-dependent protein kinase type 1G (476 aa).

Residues 23–277 enclose the Protein kinase domain; the sequence is FIFMEVLGSG…CEKALRHPWI (255 aa). Residues 29–37 and K52 contribute to the ATP site; that span reads LGSGAFSEV. Catalysis depends on D143, which acts as the Proton acceptor. An autoinhibitory domain region spans residues 277-317; the sequence is IDGNTALHRDIYPSVSLQIQKNFAKSKWRQAFNAAAVVHHM. The calmodulin-binding stretch occupies residues 297–318; sequence KNFAKSKWRQAFNAAAVVHHMR. The segment at 326-387 is disordered; the sequence is SPSVRQEVEN…SSRPSAPGGR (62 aa).

Belongs to the protein kinase superfamily. CAMK Ser/Thr protein kinase family. CaMK subfamily. Post-translationally, prenylated on Cys-473.

It is found in the cytoplasm. It localises to the golgi apparatus membrane. Its subcellular location is the cell membrane. It catalyses the reaction L-seryl-[protein] + ATP = O-phospho-L-seryl-[protein] + ADP + H(+). The catalysed reaction is L-threonyl-[protein] + ATP = O-phospho-L-threonyl-[protein] + ADP + H(+). Activated by Ca(2+)/calmodulin. Binding of calmodulin is thought to result in a conformational change and leads to activation through phosphorylation by CAMKK1. Its function is as follows. Calcium/calmodulin-dependent protein kinase belonging to a proposed calcium-triggered signaling cascade. In vitro phosphorylates transcription factor CREB1. The sequence is that of Calcium/calmodulin-dependent protein kinase type 1G (Camk1g) from Rattus norvegicus (Rat).